We begin with the raw amino-acid sequence, 365 residues long: Bifunctional chorismate mutase/prephenate dehydratase (365 aa).

The region spanning 1–96 is the Chorismate mutase domain; it reads MSEADQLKAL…SCLALEQPLR (96 aa). Substrate contacts are provided by Arg11, Arg28, Lys39, and Glu57. A Prephenate dehydratase domain is found at 97–272; the sequence is VAYLGPEGTF…NSTRFLIIGS (176 aa). The 78-residue stretch at 284 to 361 folds into the ACT domain; that stretch reads SIIVSMRNKP…VALKVLGSYP (78 aa).

The protein resides in the cytoplasm. The catalysed reaction is chorismate = prephenate. It carries out the reaction prephenate + H(+) = 3-phenylpyruvate + CO2 + H2O. It functions in the pathway amino-acid biosynthesis; L-phenylalanine biosynthesis; phenylpyruvate from prephenate: step 1/1. Its pathway is metabolic intermediate biosynthesis; prephenate biosynthesis; prephenate from chorismate: step 1/1. Functionally, catalyzes the Claisen rearrangement of chorismate to prephenate and the decarboxylation/dehydration of prephenate to phenylpyruvate. The protein is Bifunctional chorismate mutase/prephenate dehydratase of Stutzerimonas stutzeri (Pseudomonas stutzeri).